We begin with the raw amino-acid sequence, 179 residues long: Adenine phosphoribosyltransferase (179 aa).

This sequence belongs to the purine/pyrimidine phosphoribosyltransferase family. In terms of assembly, homodimer.

The protein localises to the cytoplasm. It catalyses the reaction AMP + diphosphate = 5-phospho-alpha-D-ribose 1-diphosphate + adenine. Its pathway is purine metabolism; AMP biosynthesis via salvage pathway; AMP from adenine: step 1/1. Functionally, catalyzes a salvage reaction resulting in the formation of AMP, that is energically less costly than de novo synthesis. The polypeptide is Adenine phosphoribosyltransferase (Histophilus somni (strain 129Pt) (Haemophilus somnus)).